A 729-amino-acid polypeptide reads, in one-letter code: Phosphoribosylformylglycinamidine synthase subunit PurL (729 aa).

The active site involves histidine 54. 2 residues coordinate ATP: tyrosine 57 and lysine 96. A Mg(2+)-binding site is contributed by glutamate 98. Residues 99–102 (SHNH) and arginine 121 contribute to the substrate site. Histidine 100 (proton acceptor) is an active-site residue. Aspartate 122 contacts Mg(2+). Glutamine 245 is a substrate binding site. A Mg(2+)-binding site is contributed by aspartate 273. Position 317–319 (317–319 (ETQ)) interacts with substrate. 2 residues coordinate ATP: aspartate 495 and glycine 532. Asparagine 533 provides a ligand contact to Mg(2+). Residue serine 535 participates in substrate binding.

It belongs to the FGAMS family. In terms of assembly, monomer. Part of the FGAM synthase complex composed of 1 PurL, 1 PurQ and 2 PurS subunits.

It localises to the cytoplasm. It carries out the reaction N(2)-formyl-N(1)-(5-phospho-beta-D-ribosyl)glycinamide + L-glutamine + ATP + H2O = 2-formamido-N(1)-(5-O-phospho-beta-D-ribosyl)acetamidine + L-glutamate + ADP + phosphate + H(+). The protein operates within purine metabolism; IMP biosynthesis via de novo pathway; 5-amino-1-(5-phospho-D-ribosyl)imidazole from N(2)-formyl-N(1)-(5-phospho-D-ribosyl)glycinamide: step 1/2. In terms of biological role, part of the phosphoribosylformylglycinamidine synthase complex involved in the purines biosynthetic pathway. Catalyzes the ATP-dependent conversion of formylglycinamide ribonucleotide (FGAR) and glutamine to yield formylglycinamidine ribonucleotide (FGAM) and glutamate. The FGAM synthase complex is composed of three subunits. PurQ produces an ammonia molecule by converting glutamine to glutamate. PurL transfers the ammonia molecule to FGAR to form FGAM in an ATP-dependent manner. PurS interacts with PurQ and PurL and is thought to assist in the transfer of the ammonia molecule from PurQ to PurL. The sequence is that of Phosphoribosylformylglycinamidine synthase subunit PurL from Staphylococcus aureus (strain Mu3 / ATCC 700698).